We begin with the raw amino-acid sequence, 475 residues long: MQETGGYKTEGYNVGSDKVDSDKTKTVLHQIVHDKEIWVAARKLQQPLTRFQNEITQSQRDFYHALQGDKTVFILECKKASPSKGVIRDNFNPAEIAGVYKHYASAISVLTDEKYFQGSFDFLPQVSAAVTQPVLCKDFIIDAYQIQLARFYHADAILLMLSVLDDEAYRQLAAVAHSLNMGVLTEASNAEELERAITLGAKVVGINNRDLRDLSIDLNRTRELAPRLPEGVTIISESGISHYRQVRELSQFANGFLIGSALMSEPDLNAAVRRVLLGENKVCGLTRAQDAATAYHAGAVYGGLIFVDSSPRYVDIASARTVISGAPLKYVGVFRHAEIETVRQTAEQLSLAAVQLHGHEDQQYINQLRKVLPADCQIWKALSVGDTMPERNLQQVERYVLDHGTGGTGQRFDWSLLADQALDNVLLAGGLGPDNCDVAAQLGCAGLDVNSGVESAPGIKDPQRIAAVFQALRVY.

Residues 1 to 279 (MQETGGYKTE…AAVRRVLLGE (279 aa)) form an indole-3-glycerol phosphate synthase region. The interval 280–475 (NKVCGLTRAQ…AAVFQALRVY (196 aa)) is N-(5'-phosphoribosyl)anthranilate isomerase.

The protein in the N-terminal section; belongs to the TrpC family. This sequence in the C-terminal section; belongs to the TrpF family. In terms of assembly, monomer.

The catalysed reaction is N-(5-phospho-beta-D-ribosyl)anthranilate = 1-(2-carboxyphenylamino)-1-deoxy-D-ribulose 5-phosphate. It catalyses the reaction 1-(2-carboxyphenylamino)-1-deoxy-D-ribulose 5-phosphate + H(+) = (1S,2R)-1-C-(indol-3-yl)glycerol 3-phosphate + CO2 + H2O. It functions in the pathway amino-acid biosynthesis; L-tryptophan biosynthesis; L-tryptophan from chorismate: step 3/5. The protein operates within amino-acid biosynthesis; L-tryptophan biosynthesis; L-tryptophan from chorismate: step 4/5. Its function is as follows. Bifunctional enzyme that catalyzes two sequential steps of tryptophan biosynthetic pathway. The first reaction is catalyzed by the isomerase, coded by the TrpF domain; the second reaction is catalyzed by the synthase, coded by the TrpC domain. The protein is Tryptophan biosynthesis protein TrpCF (trpC) of Yersinia pestis.